The chain runs to 769 residues: Serine protease HtrA-like (769 aa).

A compositionally biased stretch (basic residues) spans 1 to 20; that stretch reads MDIGKKHVIPKSQYRRKRRE. The disordered stretch occupies residues 1 to 390; it reads MDIGKKHVIP…ATSKLNKGRA (390 aa). Composition is skewed to basic and acidic residues over residues 21-64 and 71-108; these read FFHN…ERFK and LEQR…DVSK. Residues 126–137 show a composition bias toward polar residues; it reads YEQNSEATLSTK. The segment covering 138-186 has biased composition (basic and acidic residues); it reads STDKVESTEMRKLSSDKNKVGHEEQHVLSKPSEHDKETRIDSESSRTDS. Residues 247 to 262 show a composition bias toward polar residues; it reads QQSQNEQTKTYTYGDS. 2 stretches are compositionally biased toward basic and acidic residues: residues 264 to 296 and 310 to 330; these read QNDK…HIVD and KTDD…HKQN. Positions 331–347 are enriched in polar residues; the sequence is ADSSETVGYQSQSTASH. Residues 348–364 show a composition bias toward basic and acidic residues; that stretch reads RSTEKRNISINDHDKLN. Over residues 365–390 the composition is skewed to polar residues; sequence GQKTNTKTSANNNQKKATSKLNKGRA. A helical transmembrane segment spans residues 410-430; the sequence is LVILMGIIILIVILNAIFNNV. Catalysis depends on charge relay system residues His-504, Asp-534, and Ser-619. A PDZ domain is found at 680 to 733; the sequence is IASLNSFERQAVKLPGKVKNGVVVDQVDNNGLADQSGLKKGDVITELDGKLLED.

The protein belongs to the peptidase S1C family.

It is found in the cell membrane. This is Serine protease HtrA-like from Staphylococcus aureus (strain COL).